The following is a 303-amino-acid chain: Phenoloxidase-activating factor 2 (303 aa).

A disordered region spans residues 1 to 24 (PDRRPPEDPITPPPPTKEEQRAGC). The 257-residue stretch at 36–292 (IIGDKDGEAK…LRDWIDDKVA (257 aa)) folds into the Peptidase S1 domain. Disulfide bonds link Cys173/Cys247, Cys206/Cys227, and Cys237/Cys268.

It belongs to the peptidase S1 family. In terms of assembly, heterodimer.

It localises to the secreted. In terms of biological role, binds and activates processed prophenoloxidases PPO1 and PPO2 and thus is involved in the activation of the prophenoloxidase cascade probably following the recognition of pathogen-derived products. Binds the A.niger cell wall component alpha-1,3-glucan, a fungal pathogen-associated molecular pattern (PAMP) that activates the host immune response. The polypeptide is Phenoloxidase-activating factor 2 (LOC113510063) (Galleria mellonella (Greater wax moth)).